The sequence spans 557 residues: Dihydroxy-acid dehydratase (557 aa).

Cysteine 50 provides a ligand contact to [2Fe-2S] cluster. Aspartate 82 is a binding site for Mg(2+). Residue cysteine 123 coordinates [2Fe-2S] cluster. Mg(2+) contacts are provided by aspartate 124 and lysine 125. Residue lysine 125 is modified to N6-carboxylysine. Cysteine 195 provides a ligand contact to [2Fe-2S] cluster. Glutamate 447 serves as a coordination point for Mg(2+). Residue serine 473 is the Proton acceptor of the active site.

Belongs to the IlvD/Edd family. In terms of assembly, homodimer. The cofactor is [2Fe-2S] cluster. Mg(2+) serves as cofactor.

It catalyses the reaction (2R)-2,3-dihydroxy-3-methylbutanoate = 3-methyl-2-oxobutanoate + H2O. The enzyme catalyses (2R,3R)-2,3-dihydroxy-3-methylpentanoate = (S)-3-methyl-2-oxopentanoate + H2O. It functions in the pathway amino-acid biosynthesis; L-isoleucine biosynthesis; L-isoleucine from 2-oxobutanoate: step 3/4. Its pathway is amino-acid biosynthesis; L-valine biosynthesis; L-valine from pyruvate: step 3/4. Functions in the biosynthesis of branched-chain amino acids. Catalyzes the dehydration of (2R,3R)-2,3-dihydroxy-3-methylpentanoate (2,3-dihydroxy-3-methylvalerate) into 2-oxo-3-methylpentanoate (2-oxo-3-methylvalerate) and of (2R)-2,3-dihydroxy-3-methylbutanoate (2,3-dihydroxyisovalerate) into 2-oxo-3-methylbutanoate (2-oxoisovalerate), the penultimate precursor to L-isoleucine and L-valine, respectively. The protein is Dihydroxy-acid dehydratase of Nitrosomonas europaea (strain ATCC 19718 / CIP 103999 / KCTC 2705 / NBRC 14298).